The chain runs to 352 residues: UDP-N-acetylglucosamine--N-acetylmuramyl-(pentapeptide) pyrophosphoryl-undecaprenol N-acetylglucosamine transferase (352 aa).

Residues S195 and Q287 each contribute to the UDP-N-acetyl-alpha-D-glucosamine site.

It belongs to the glycosyltransferase 28 family. MurG subfamily.

Its subcellular location is the cell membrane. It catalyses the reaction Mur2Ac(oyl-L-Ala-gamma-D-Glu-L-Lys-D-Ala-D-Ala)-di-trans,octa-cis-undecaprenyl diphosphate + UDP-N-acetyl-alpha-D-glucosamine = beta-D-GlcNAc-(1-&gt;4)-Mur2Ac(oyl-L-Ala-gamma-D-Glu-L-Lys-D-Ala-D-Ala)-di-trans,octa-cis-undecaprenyl diphosphate + UDP + H(+). It functions in the pathway cell wall biogenesis; peptidoglycan biosynthesis. Cell wall formation. Catalyzes the transfer of a GlcNAc subunit on undecaprenyl-pyrophosphoryl-MurNAc-pentapeptide (lipid intermediate I) to form undecaprenyl-pyrophosphoryl-MurNAc-(pentapeptide)GlcNAc (lipid intermediate II). The polypeptide is UDP-N-acetylglucosamine--N-acetylmuramyl-(pentapeptide) pyrophosphoryl-undecaprenol N-acetylglucosamine transferase (Streptococcus pneumoniae (strain JJA)).